A 152-amino-acid chain; its full sequence is uncharacterized protein (152 aa).

This sequence belongs to the transposase 8 family.

This is an uncharacterized protein from Sinorhizobium fredii (strain NBRC 101917 / NGR234).